A 267-amino-acid chain; its full sequence is NAD-capped RNA hydrolase NudC (267 aa).

R70 is a substrate binding site. Residues C99 and C102 each contribute to the Zn(2+) site. E112 contacts substrate. 2 residues coordinate Zn(2+): C117 and C122. Y127 provides a ligand contact to substrate. The Nudix hydrolase domain occupies 128–257 (PVICPSIIVA…TIARALIEAT (130 aa)). 3 residues coordinate a divalent metal cation: A166, E182, and E186. Positions 167–188 (GFVEVGESFEQTIHREVFEETG) match the Nudix box motif. 200 to 207 (QPWAFPNS) provides a ligand contact to substrate. E227 is a binding site for a divalent metal cation. Substrate is bound at residue A250.

It belongs to the Nudix hydrolase family. NudC subfamily. As to quaternary structure, homodimer. Requires Mg(2+) as cofactor. It depends on Mn(2+) as a cofactor. Zn(2+) serves as cofactor.

It catalyses the reaction a 5'-end NAD(+)-phospho-ribonucleoside in mRNA + H2O = a 5'-end phospho-adenosine-phospho-ribonucleoside in mRNA + beta-nicotinamide D-ribonucleotide + 2 H(+). The enzyme catalyses NAD(+) + H2O = beta-nicotinamide D-ribonucleotide + AMP + 2 H(+). It carries out the reaction NADH + H2O = reduced beta-nicotinamide D-ribonucleotide + AMP + 2 H(+). Functionally, mRNA decapping enzyme that specifically removes the nicotinamide adenine dinucleotide (NAD) cap from a subset of mRNAs by hydrolyzing the diphosphate linkage to produce nicotinamide mononucleotide (NMN) and 5' monophosphate mRNA. The NAD-cap is present at the 5'-end of some mRNAs and stabilizes RNA against 5'-processing. Has preference for mRNAs with a 5'-end purine. Catalyzes the hydrolysis of a broad range of dinucleotide pyrophosphates. This Mannheimia succiniciproducens (strain KCTC 0769BP / MBEL55E) protein is NAD-capped RNA hydrolase NudC.